Consider the following 261-residue polypeptide: ATP synthase subunit a (261 aa).

8 helical membrane passes run 30 to 50 (VLFT…GLFM), 63 to 83 (WQVA…ANIG), 96 to 116 (LFMF…VLGL), 125 to 145 (IAIT…VGFW), 151 to 171 (FFSL…IAPI), 187 to 207 (LFVA…FVIN), 214 to 234 (LWLG…ISAL), and 235 to 255 (ELLV…LYIN).

This sequence belongs to the ATPase A chain family. As to quaternary structure, F-type ATPases have 2 components, CF(1) - the catalytic core - and CF(0) - the membrane proton channel. CF(1) has five subunits: alpha(3), beta(3), gamma(1), delta(1), epsilon(1). CF(0) has three main subunits: a(1), b(2) and c(9-12). The alpha and beta chains form an alternating ring which encloses part of the gamma chain. CF(1) is attached to CF(0) by a central stalk formed by the gamma and epsilon chains, while a peripheral stalk is formed by the delta and b chains.

Its subcellular location is the cell inner membrane. Key component of the proton channel; it plays a direct role in the translocation of protons across the membrane. The polypeptide is ATP synthase subunit a (Sphingopyxis alaskensis (strain DSM 13593 / LMG 18877 / RB2256) (Sphingomonas alaskensis)).